Here is a 345-residue protein sequence, read N- to C-terminus: Ubiquitin-associated domain-containing protein 2 (345 aa).

The N-terminal stretch at 1 to 39 (MFTSTGSSGLYKAPLSKSLLLVPSALSLLLTLLLPHCQK) is a signal peptide. Residues 40–91 (FFVYDLHAVKHDLQIWRLICGRIICLDLKDAFCSGLLIYNFRIFERRYGSRK) lie on the Extracellular side of the membrane. The chain crosses the membrane as a helical span at residues 92-112 (FASFLLGSWVLSALFDFILVE). Residues 113–125 (AVQYSLGVTVASN) lie on the Cytoplasmic side of the membrane. The helical transmembrane segment at 126–146 (LPSGFLAPVFALFVPFHCSIP) threads the bilayer. Topologically, residues 147-163 (RVQVAQILGPLSITNKT) are extracellular. N161 carries an N-linked (GlcNAc...) asparagine glycan. A helical transmembrane segment spans residues 164–184 (LIYILGLQLFTSGSYIWIVAM). Over 185 to 345 (SGLISGMCYD…NVATNFLLQH (161 aa)) the chain is Cytoplasmic. The segment at 287-306 (NINYQDGPRSEQRASPPLEV) is disordered. Residues 305–345 (EVSEEQVARLMEMGFSRGDALEALRASNNDLNVATNFLLQH) form the UBA domain.

In terms of assembly, interacts with LMBR1L, FAF2, AMFR and VCP.

The protein localises to the endoplasmic reticulum membrane. In terms of biological role, restricts trafficking of FAF2 from the endoplasmic reticulum to lipid droplets. In association with LMBR1L and E3 ubiquitin-protein ligase AMFR, negatively regulates the canonical Wnt signaling pathway in the lymphocytes by promoting the ubiquitin-mediated degradation of CTNNB1 and Wnt receptors FZD6 and LRP6. This is Ubiquitin-associated domain-containing protein 2 (Ubac2) from Mus musculus (Mouse).